We begin with the raw amino-acid sequence, 1377 residues long: MAKTSWTPGQQKVIDTRDCNLLVSAAAGSGKTAVLVERIINRITSENSPINIDQLLIVTFTKAAAGEMRERIGAAIEKKVLEQPDNVHLQKQLTLLYSAQITTIDSFCLSVIRNHFHTIDLDPSFRIAEEAELMLLKSDVLATLLEEKYEEGAEDFLEFVECYSASKSDEPIENFILKLYQFSQSYPYPHEWLEEREKDFLVETAEDINQTSWMKQLLQYVKAILREASDLCAKAIEITNYPDGPKPYLDALLSDQEIIERLLNSDAGSQHSYEEYQDAFSNITFARLSTKKWPDATEERKEEVKAIRQMVKKILSDLSDDFFFQPMEDMLTDMRKVRRPMLVLLSLTHDFLERLDASKEENNLVDFSDIEHFALNILVTKEDGNLVPTKVATEMSEQFVEIMIDEYQDSNYVQEYILSSISKVTRGCPNVFMVGDVKQSIYKFRMARPELFMEKYEQYSTEEGLYRRIDLSKNFRSRAEVLDSINGVFEKIMTKAMGGIEYTKEVSLYPGAQFPEIGMDLDNTSFLFSDTKTELIILDLKEEEASIPDSMDRLDVMALEEDAIELSKRELEAKAVAMRIKQLVHGERGFSVTKRNGEEQDLKRCQYRDIVILLRTMSGWSETFTEILKQEGIPAYSDTQTGYFQTLEVKTVLNYLRILDNPRQDAPLTAILYSPIVGLSAEQLSFLRVKPGKGAEKLSIYDAARECALNYLEIQDEVTQPEETQPVYDSIIQADLMYEKSSAEKTVSMDKNLIETGEKLKRFFATYDKLREKAIYLPVHEIILEFFKETGYDLFVYAMPGGEQRRNNLNLLVQHALSFEESSYHGLFQFIRYIERLLKFEIDYGEAGGLSENDNAVRIMSIHKSKGLEFPVVILAGMGKQFNTMDAREKIVLHADYGIGPECIDYQLRTKCPTLLKQVIKKNIVLDNLGEELRVLYVALTRAKEKLIMIGSANDANDVFDKWRQDSTPGVTPLRFQTLAMAKDYFSFVGPAALYDSRIRVITLTPNDLLEDEYEKQTDIKNKQEELNPYNFLQSFEEESDEQSDEERSDEERSDGEQSDGEQSDGEQPRKDLLTKLSFRYPYEHEAMLPIKTTVSELKKLSQQVDEELTETFTQVKDELTKTWPQVDEELTEKYPQVEELIETSPPVKEESQMLIEPTIPKFLKEEKELRGTERGNLYHKILELIDFSDNKTKLNLREFVSQLANRGLIQEESISSINFERLSRFFESELYQRIQIAYQKGYLYREQPFVIGIPVREISTQKFVRTTQAQASSILSKNEDFSHANLCSCPNSQDYENDDLVLIQGIIDVYFEEEDGIVLVDYKTDAVGELGEEELIRRYQEQIRYYERALNQLLDKTVKEKIIYSFSLGKEIRIKS.

Positions 4–478 (TSWTPGQQKV…IDLSKNFRSR (475 aa)) constitute a UvrD-like helicase ATP-binding domain. 25 to 32 (AAAGSGKT) contributes to the ATP binding site. The UvrD-like helicase C-terminal domain maps to 526–867 (FLFSDTKTEL…RIMSIHKSKG (342 aa)). Residues 1036-1065 (FEEESDEQSDEERSDEERSDGEQSDGEQSD) are compositionally biased toward acidic residues. The segment at 1036–1072 (FEEESDEQSDEERSDEERSDGEQSDGEQSDGEQPRKD) is disordered.

This sequence belongs to the helicase family. AddA subfamily. In terms of assembly, heterodimer of AddA and AddB/RexB. Requires Mg(2+) as cofactor.

It catalyses the reaction Couples ATP hydrolysis with the unwinding of duplex DNA by translocating in the 3'-5' direction.. It carries out the reaction ATP + H2O = ADP + phosphate + H(+). Its function is as follows. The heterodimer acts as both an ATP-dependent DNA helicase and an ATP-dependent, dual-direction single-stranded exonuclease. Recognizes the chi site generating a DNA molecule suitable for the initiation of homologous recombination. The AddA nuclease domain is required for chi fragment generation; this subunit has the helicase and 3' -&gt; 5' nuclease activities. This is ATP-dependent helicase/nuclease subunit A from Lachnoclostridium phytofermentans (strain ATCC 700394 / DSM 18823 / ISDg) (Clostridium phytofermentans).